Reading from the N-terminus, the 428-residue chain is MNLDQAEITALTKRFETPFYLYDGDFIEAHYRQLRSRTNPAIQFYLSLKANNNIHLAKLFRQWGLGVEVASAGELALARHAGFSAENIIFSGPGKKRSELEIAVQSGIYCIIAESVEELFYIEELAEKENKTARVAIRINPDKSFGSTAIKMGGVPRQFGMDESMLDAVMDAVRSLQFTKFIGIHVYTGTQNLNTDSIIESMKYTVDLGRNIYERYGIVCECINLGGGFGVPYFSHEKALDIGKITRTVSDYVQEARDTRFPQTTFIIESGRYLLAQAAVYVTEVLYRKASKGEVFVIVDGGMHHHAASTFRGRSMRSNYPMEYIPVREDSGRRELEKVTIAGPLCTPEDCLGKDVHVPALYPGDLVCVLNSGAYGLSFSPVHFLGHPTPIEILKRNGSYELIRRKGTADDIVATQLQTESNLLFVDK.

At Lys49 the chain carries N6-(pyridoxal phosphate)lysine. Pyridoxal 5'-phosphate is bound by residues Gly228, 269-272, and Tyr375; that span reads ESGR. 2 residues coordinate substrate: Arg272 and Tyr375.

The protein belongs to the Orn/Lys/Arg decarboxylase class-II family. In terms of assembly, homodimer. Requires pyridoxal 5'-phosphate as cofactor.

It carries out the reaction gamma-L-glutamyl-[BtrI ACP] + H(+) = 4-aminobutanoyl-[BtrI ACP] + CO2. The protein operates within antibiotic biosynthesis; butirosin biosynthesis. In terms of biological role, pyridoxal phosphate-dependent decarboxylase that catalyzes 1 step in the biosynthesis of the side chain of the aminoglycoside antibiotics in the biosynthetic pathway of butirosin. Able to decarboxylate L-ornithine, L-arginine, L-lysine, but not L-glutamate or any D-amino acids. Has low activity with substrates not bound to an acyl-carrier protein. In Niallia circulans (Bacillus circulans), this protein is L-glutamyl-[BtrI acyl-carrier protein] decarboxylase (btrK).